A 484-amino-acid chain; its full sequence is MSNPHSSAVIVLAAGAGTRMKSAKQKTLHSIGGRSLLAHSLHAAAGLSPQRIVAVIGHRREQVRPEVEAVAATVDCEISVAIQEQQNGTGHAVQCAMHELEGFEGTVVVTNGDVPLLRSETLRSLVDAHTAVPTAVTVLTMSLSDPTGYGRIVRNDEGEVTAIVEQKDGDEETLKITEVNSGVFAFDAAILRSSLGKLDSNNAQGELYLTDVLSIARTEGHPVRAYRAHDHRELAGVNDRVQLAQAGKILNQRLVEDAMRNGATIVDPDTTWIDSEVTIGRDVIIHPSTQLLGKTSIADNCVIGPDTTLTNMVIDEDAHVIRTHGFDSRIGAHANIGPFTYIRPGTVVGENGKLGGFVEAKNAQIGRGSKVPHLTYIGDATVGEESNIGASSVFVNYDGVNKHHTTIGSHVRTGSDTMFIAPVTVGDGAYSGAGTVIKEDVPAGALVVSGGKQRNIEGWVEKNRPGTPAADAARQAHAHETKEG.

A pyrophosphorylase region spans residues 1–240; sequence MSNPHSSAVI…HRELAGVNDR (240 aa). UDP-N-acetyl-alpha-D-glucosamine is bound by residues 12–15, K26, Q83, and 88–89; these read LAAG and GT. D113 is a binding site for Mg(2+). 4 residues coordinate UDP-N-acetyl-alpha-D-glucosamine: G150, E165, N180, and N238. Mg(2+) is bound at residue N238. The linker stretch occupies residues 241 to 261; that stretch reads VQLAQAGKILNQRLVEDAMRN. An N-acetyltransferase region spans residues 262–484; sequence GATIVDPDTT…QAHAHETKEG (223 aa). 2 residues coordinate UDP-N-acetyl-alpha-D-glucosamine: R343 and K361. Catalysis depends on H373, which acts as the Proton acceptor. UDP-N-acetyl-alpha-D-glucosamine-binding residues include Y376 and N387. Residues A390, 396 to 397, S415, and A433 contribute to the acetyl-CoA site; that span reads NY. The disordered stretch occupies residues 461-484; it reads EKNRPGTPAADAARQAHAHETKEG.

It in the N-terminal section; belongs to the N-acetylglucosamine-1-phosphate uridyltransferase family. The protein in the C-terminal section; belongs to the transferase hexapeptide repeat family. As to quaternary structure, homotrimer. Requires Mg(2+) as cofactor.

It localises to the cytoplasm. It carries out the reaction alpha-D-glucosamine 1-phosphate + acetyl-CoA = N-acetyl-alpha-D-glucosamine 1-phosphate + CoA + H(+). The catalysed reaction is N-acetyl-alpha-D-glucosamine 1-phosphate + UTP + H(+) = UDP-N-acetyl-alpha-D-glucosamine + diphosphate. It participates in nucleotide-sugar biosynthesis; UDP-N-acetyl-alpha-D-glucosamine biosynthesis; N-acetyl-alpha-D-glucosamine 1-phosphate from alpha-D-glucosamine 6-phosphate (route II): step 2/2. Its pathway is nucleotide-sugar biosynthesis; UDP-N-acetyl-alpha-D-glucosamine biosynthesis; UDP-N-acetyl-alpha-D-glucosamine from N-acetyl-alpha-D-glucosamine 1-phosphate: step 1/1. It functions in the pathway bacterial outer membrane biogenesis; LPS lipid A biosynthesis. Its function is as follows. Catalyzes the last two sequential reactions in the de novo biosynthetic pathway for UDP-N-acetylglucosamine (UDP-GlcNAc). The C-terminal domain catalyzes the transfer of acetyl group from acetyl coenzyme A to glucosamine-1-phosphate (GlcN-1-P) to produce N-acetylglucosamine-1-phosphate (GlcNAc-1-P), which is converted into UDP-GlcNAc by the transfer of uridine 5-monophosphate (from uridine 5-triphosphate), a reaction catalyzed by the N-terminal domain. The sequence is that of Bifunctional protein GlmU from Corynebacterium diphtheriae (strain ATCC 700971 / NCTC 13129 / Biotype gravis).